We begin with the raw amino-acid sequence, 1128 residues long: Cordon-bleu protein-like 1 (1128 aa).

The tract at residues 1–35 (MDGRTPRPQDAPARRKPKAKAPLPPAETKYTDVSS) is disordered. At T139 the chain carries Phosphothreonine. Residues S204, S222, and S256 each carry the phosphoserine modification. 3 disordered regions span residues 249-309 (KKRD…VPQD), 325-441 (MSVD…SPKS), and 454-499 (TLKN…TSNG). Position 260 is a phosphothreonine (T260). Residues 270-286 (FTRSNTISKPYISNTLP) show a composition bias toward polar residues. At S273 the chain carries Phosphoserine. At T284 the chain carries Phosphothreonine. The short motif at 291–296 (KKRRAP) is the KKRRAP 1 element. Phosphoserine is present on residues S326, S333, S344, and S356. The segment covering 345 to 357 (LQLSSMSAGNSSL) has biased composition (polar residues). The short motif at 360-365 (TKRKAP) is the KKRRAP 2 element. The span at 397–415 (SEANSPEELSSPAGISSDY) shows a compositional bias: polar residues. Acidic residues predominate over residues 416-425 (SLEEIDEKEE). Phosphoserine occurs at positions 438, 441, 461, 471, and 474. Residues 475-488 (MEEKQETKSTDGQE) show a composition bias toward basic and acidic residues. S563, S584, S786, S813, S814, and S821 each carry phosphoserine. Disordered regions lie at residues 780 to 840 (TEDS…PFAP), 882 to 964 (SAAA…SQVS), 995 to 1081 (RSQS…PEQM), and 1103 to 1128 (IPSNTISVNGRSRLSHSMSPDAQDGH). Over residues 899–908 (LTNKEAERDM) the composition is skewed to basic and acidic residues. S911, S917, S947, S1069, and S1070 each carry phosphoserine. 2 stretches are compositionally biased toward polar residues: residues 1045 to 1081 (SAHNEQNSQIPTPTDGPSFTVMRQSSLTFQSSDPEQM) and 1103 to 1122 (IPSNTISVNGRSRLSHSMSP). Residues 1081–1101 (MRQSLLTAIRSGEAAAKLKRV) enclose the WH2 domain. Residue S1121 is modified to Phosphoserine.

This Homo sapiens (Human) protein is Cordon-bleu protein-like 1.